A 407-amino-acid polypeptide reads, in one-letter code: Pyridinium-3,5-bisthiocarboxylic acid mononucleotide nickel insertion protein (407 aa).

This sequence belongs to the LarC family.

It catalyses the reaction Ni(II)-pyridinium-3,5-bisthiocarboxylate mononucleotide = pyridinium-3,5-bisthiocarboxylate mononucleotide + Ni(2+). In terms of biological role, involved in the biosynthesis of a nickel-pincer cofactor ((SCS)Ni(II) pincer complex). Binds Ni(2+), and functions in nickel delivery to pyridinium-3,5-bisthiocarboxylic acid mononucleotide (P2TMN), to form the mature cofactor. Is thus probably required for the activation of nickel-pincer cofactor-dependent enzymes. The protein is Pyridinium-3,5-bisthiocarboxylic acid mononucleotide nickel insertion protein of Acetivibrio thermocellus (strain ATCC 27405 / DSM 1237 / JCM 9322 / NBRC 103400 / NCIMB 10682 / NRRL B-4536 / VPI 7372) (Clostridium thermocellum).